The sequence spans 1007 residues: Lysosomal alpha-mannosidase (1007 aa).

Low complexity-rich tracts occupy residues 1–10 (MGADARPLGV) and 19–28 (AARPGTSSRA). Residues 1 to 30 (MGADARPLGVRAGGGGRGAARPGTSSRALP) are disordered. An N-terminal signal peptide occupies residues 1 to 50 (MGADARPLGVRAGGGGRGAARPGTSSRALPPPLPPLSFLLLLLAAPGARA). Intrachain disulfides connect Cys-56–Cys-360 and Cys-269–Cys-274. His-73 and Asp-75 together coordinate Zn(2+). Asn-134 carries N-linked (GlcNAc...) asparagine glycosylation. Position 197 (Asp-197) interacts with Zn(2+). Asp-197 functions as the Nucleophile in the catalytic mechanism. N-linked (GlcNAc...) asparagine glycosylation is found at Asn-311, Asn-347, and Asn-369. 2 disulfides stabilise this stretch: Cys-414–Cys-474 and Cys-495–Cys-503. His-448 is a Zn(2+) binding site. N-linked (GlcNAc...) asparagine glycosylation is found at Asn-499, Asn-543, Asn-643, Asn-649, Asn-690, Asn-764, and Asn-927.

Belongs to the glycosyl hydrolase 38 family. Zn(2+) serves as cofactor. Post-translationally, processed into 3 peptides of 72 kDa, 41 kDa and 12 kDa.

It is found in the lysosome. The catalysed reaction is Hydrolysis of terminal, non-reducing alpha-D-mannose residues in alpha-D-mannosides.. Necessary for the catabolism of N-linked carbohydrates released during glycoprotein turnover. The protein is Lysosomal alpha-mannosidase (MAN2B1) of Felis catus (Cat).